The following is a 302-amino-acid chain: Glutaminase (302 aa).

Substrate is bound by residues Ser61, Asn111, Glu155, Asn162, Tyr186, Tyr238, and Val256.

This sequence belongs to the glutaminase family. Homotetramer.

It catalyses the reaction L-glutamine + H2O = L-glutamate + NH4(+). The sequence is that of Glutaminase from Stutzerimonas stutzeri (strain A1501) (Pseudomonas stutzeri).